Reading from the N-terminus, the 846-residue chain is Putative transcriptional regulator tpeD (846 aa).

A BED-type; degenerate zinc finger spans residues 104–166 (KHQSECWQHF…NCRKSVPVSK (63 aa)). Residues 734 to 846 (RAREERDAQQ…RDEDFVYETP (113 aa)) are disordered. Residues 756-769 (PISDSEEAESEDES) show a composition bias toward acidic residues. Low complexity predominate over residues 773 to 786 (PQSPQASQARSQRS). The span at 797–809 (PLIELDGNEEDEV) shows a compositional bias: acidic residues.

It is found in the nucleus. In terms of biological role, putative transcriptional regulator; part of the gene cluster that mediates the biosynthesis of polyesters containing 2,4-dihydroxy-6-(2-hydroxypropyl)benzoate and 3-hydroxybutyrate moieties, such as talapolyester G, 15G256beta and 15G256beta-2; as well as to oxidized derivatives such as 15G256alpha. The protein is Putative transcriptional regulator tpeD of Talaromyces stipitatus (strain ATCC 10500 / CBS 375.48 / QM 6759 / NRRL 1006) (Penicillium stipitatum).